We begin with the raw amino-acid sequence, 657 residues long: Leishmanolysin (657 aa).

The N-terminal stretch at methionine 1–alanine 41 is a signal peptide. Positions histidine 42–valine 102 are cleaved as a propeptide — activation peptide. Residues glycine 44–alanine 611 lie on the Extracellular side of the membrane. N-linked (GlcNAc...) asparagine glycosylation is present at asparagine 107. Intrachain disulfides connect cysteine 127/cysteine 144 and cysteine 193/cysteine 232. Histidine 266 contributes to the Zn(2+) binding site. Glutamate 267 is a catalytic residue. Histidine 270 contributes to the Zn(2+) binding site. Asparagine 302 carries N-linked (GlcNAc...) asparagine glycosylation. Intrachain disulfides connect cysteine 316–cysteine 388, cysteine 395–cysteine 458, cysteine 408–cysteine 427, cysteine 417–cysteine 492, cysteine 469–cysteine 513, cysteine 518–cysteine 568, and cysteine 538–cysteine 561. Histidine 336 contacts Zn(2+). Asparagine 399, asparagine 409, asparagine 445, asparagine 466, and asparagine 501 each carry an N-linked (GlcNAc...) asparagine glycan. The helical transmembrane segment at threonine 612 to valine 632 threads the bilayer. The Cytoplasmic segment spans residues serine 633–glutamate 657.

This sequence belongs to the peptidase M8 family. Zn(2+) serves as cofactor.

The protein localises to the membrane. The enzyme catalyses Preference for hydrophobic residues at P1 and P1' and basic residues at P2' and P3'. A model nonapeptide is cleaved at -Ala-Tyr-|-Leu-Lys-Lys-.. In terms of biological role, has an integral role during the infection of macrophages in the mammalian host. The polypeptide is Leishmanolysin (mspC) (Leishmania tropica).